The primary structure comprises 478 residues: tRNA(Ile)-lysidine synthase (478 aa).

27-32 (SGGSDS) provides a ligand contact to ATP.

This sequence belongs to the tRNA(Ile)-lysidine synthase family.

The protein resides in the cytoplasm. The catalysed reaction is cytidine(34) in tRNA(Ile2) + L-lysine + ATP = lysidine(34) in tRNA(Ile2) + AMP + diphosphate + H(+). Functionally, ligates lysine onto the cytidine present at position 34 of the AUA codon-specific tRNA(Ile) that contains the anticodon CAU, in an ATP-dependent manner. Cytidine is converted to lysidine, thus changing the amino acid specificity of the tRNA from methionine to isoleucine. The protein is tRNA(Ile)-lysidine synthase of Rickettsia conorii (strain ATCC VR-613 / Malish 7).